Consider the following 164-residue polypeptide: Phosphopantetheine adenylyltransferase (164 aa).

Position 9 (S9) interacts with substrate. Residues S9 to F10 and H17 contribute to the ATP site. K41, L73, and K87 together coordinate substrate. ATP-binding positions include G88–R90, E98, and Y123–S129.

It belongs to the bacterial CoaD family. Homohexamer. Mg(2+) is required as a cofactor.

It localises to the cytoplasm. It carries out the reaction (R)-4'-phosphopantetheine + ATP + H(+) = 3'-dephospho-CoA + diphosphate. It participates in cofactor biosynthesis; coenzyme A biosynthesis; CoA from (R)-pantothenate: step 4/5. Reversibly transfers an adenylyl group from ATP to 4'-phosphopantetheine, yielding dephospho-CoA (dPCoA) and pyrophosphate. In Clostridium perfringens (strain SM101 / Type A), this protein is Phosphopantetheine adenylyltransferase.